The following is a 135-amino-acid chain: Beta-galactoside-binding lectin (135 aa).

Ser2 is subject to N-acetylserine. A disulfide bridge connects residues Cys3 and Cys8. The Galectin domain maps to 5–135 (GPVCTNLGLK…DFTLRSVSWE (131 aa)). Residues 46–50 (HFNPR), His54, Asn63, 70–73 (WGTE), and 70–76 (WGTEQRE) each bind a beta-D-galactoside.

In terms of assembly, homodimer; disulfide-linked. As to quaternary structure, (Microbial infection) Interacts with newcastle disease virus protein HN; this interaction inhibits viral adsorption rather than internalization. As to expression, mainly in the intestine (adult), mainly in the skin (embryo).

Its function is as follows. This protein binds beta-galactoside. May participate in host antiviral defense through specific interaction with glycans on the viral envelope glycoproteins. In Gallus gallus (Chicken), this protein is Beta-galactoside-binding lectin (CG-1B).